The following is a 718-amino-acid chain: Probable trehalose-phosphatase (718 aa).

Residues 449–470 (LSMDQTGHKKVDAKKKPGIRKK) are disordered. Positions 459 to 470 (VDAKKKPGIRKK) are enriched in basic residues.

It in the N-terminal section; belongs to the glycosyltransferase 20 family. The protein in the C-terminal section; belongs to the trehalose phosphatase family.

The catalysed reaction is alpha,alpha-trehalose 6-phosphate + H2O = alpha,alpha-trehalose + phosphate. The chain is Probable trehalose-phosphatase from Encephalitozoon cuniculi (strain GB-M1) (Microsporidian parasite).